The primary structure comprises 186 residues: Bis(5'-nucleosyl)-tetraphosphatase, symmetrical (186 aa).

The HD domain maps to 18–132 (RYIHTVGVMN…IYVADYIEPN (115 aa)). H21 lines the ADP pocket. Positions 21, 50, and 51 each coordinate Fe cation. ADP is bound by residues 51 to 54 (DYAK), H83, 109 to 110 (HT), D127, R133, and 170 to 175 (PVFPDT). Position 127 (D127) interacts with Fe cation.

The protein belongs to the Ap4A hydrolase YqeK family. Homodimer.

It catalyses the reaction P(1),P(4)-bis(5'-adenosyl) tetraphosphate + H2O = 2 ADP + 2 H(+). In terms of biological role, hydrolyzes diadenosine 5',5'''-P1,P4-tetraphosphate (Ap4A) to yield ADP. In Bacillus subtilis (strain 168), this protein is Bis(5'-nucleosyl)-tetraphosphatase, symmetrical (yqeK).